A 318-amino-acid chain; its full sequence is Transaldolase (318 aa).

The active-site Schiff-base intermediate with substrate is the K132.

Belongs to the transaldolase family. Type 1 subfamily. As to quaternary structure, homodimer.

It is found in the cytoplasm. It catalyses the reaction D-sedoheptulose 7-phosphate + D-glyceraldehyde 3-phosphate = D-erythrose 4-phosphate + beta-D-fructose 6-phosphate. It participates in carbohydrate degradation; pentose phosphate pathway; D-glyceraldehyde 3-phosphate and beta-D-fructose 6-phosphate from D-ribose 5-phosphate and D-xylulose 5-phosphate (non-oxidative stage): step 2/3. Its function is as follows. Transaldolase is important for the balance of metabolites in the pentose-phosphate pathway. The chain is Transaldolase from Shewanella baltica (strain OS195).